Here is a 192-residue protein sequence, read N- to C-terminus: Small ribosomal subunit protein bS16 (192 aa).

A disordered region spans residues 153-192 (AEAKAKAEAEAAAAAEEAAETEETPVEAAAEEAPAAESAE). The segment covering 178-192 (VEAAAEEAPAAESAE) has biased composition (low complexity).

It belongs to the bacterial ribosomal protein bS16 family.

This chain is Small ribosomal subunit protein bS16, found in Porphyromonas gingivalis (strain ATCC BAA-308 / W83).